Reading from the N-terminus, the 390-residue chain is Alkanesulfonate monooxygenase 1 (390 aa).

The interval 364–390 (TGSSVNTGPFGETIAGDHRPKSLASAS) is disordered.

This sequence belongs to the SsuD family.

It carries out the reaction an alkanesulfonate + FMNH2 + O2 = an aldehyde + FMN + sulfite + H2O + 2 H(+). Its function is as follows. Catalyzes the desulfonation of aliphatic sulfonates. In Mesorhizobium japonicum (strain LMG 29417 / CECT 9101 / MAFF 303099) (Mesorhizobium loti (strain MAFF 303099)), this protein is Alkanesulfonate monooxygenase 1 (ssuD1).